A 356-amino-acid polypeptide reads, in one-letter code: MAQYECSEHMENFLRELPKCEHHVHLEGTLEPSLLFKLAKRNNITLPETFPKTVEECNDRYNRFADLQDFLDHYYIGMGVLITENDFYDLAMDYFTKAHSDGCLHSEVFFDPQGHVERNIDIDVVVQGFNRACKDANTKYGTTNKLIMCLLRHLPAENGLQTIHSASKYYQDGIIHGLGLDSSEKPFPPNLFTECYAHIKDNFPEVGLTAHAGEEGDHTFVSDALNLLKVSRIDHGVNSHQSEELMQRLAEQKTLLSLCPLSNVKLQVVKDVKELPIDKFFQMNVPFSINSDDPAYFGGYILDNYKAVHTRFGFTKDQWKIIALNGIKGSWCDDQRKNELISLVEEVYKKYNIEGC.

The Zn(2+) site is built by His-23, His-25, and His-211. Glu-214 serves as the catalytic Proton donor. Asp-292 contacts Zn(2+). Asp-293 contributes to the substrate binding site.

The protein belongs to the metallo-dependent hydrolases superfamily. Adenosine and AMP deaminases family. Adenine deaminase type 2 subfamily. It depends on Zn(2+) as a cofactor.

It is found in the cytoplasm. Its subcellular location is the nucleus. The enzyme catalyses adenine + H2O + H(+) = hypoxanthine + NH4(+). Functionally, catalyzes the hydrolytic deamination of adenine to hypoxanthine. Plays an important role in the purine salvage pathway and in nitrogen catabolism. This chain is Adenine deaminase, found in Candida albicans (strain SC5314 / ATCC MYA-2876) (Yeast).